The following is a 202-amino-acid chain: Small ribosomal subunit protein uS4 (202 aa).

The tract at residues 15–42 (LGDLPGLTRKAAKRSYPPGQHGQARRKR) is disordered. One can recognise an S4 RNA-binding domain in the interval 90-152 (NRLDNVCFRL…KCSKQLAEGN (63 aa)).

Belongs to the universal ribosomal protein uS4 family. Part of the 30S ribosomal subunit. Contacts protein S5. The interaction surface between S4 and S5 is involved in control of translational fidelity.

One of the primary rRNA binding proteins, it binds directly to 16S rRNA where it nucleates assembly of the body of the 30S subunit. Its function is as follows. With S5 and S12 plays an important role in translational accuracy. In Parasynechococcus marenigrum (strain WH8102), this protein is Small ribosomal subunit protein uS4.